Consider the following 543-residue polypeptide: CTP synthase (543 aa).

The segment at 1–265 (MTRYIFVTGG…DDIVVERFGL (265 aa)) is amidoligase domain. CTP is bound at residue serine 13. Serine 13 provides a ligand contact to UTP. ATP contacts are provided by residues 14 to 19 (SLGKGI) and aspartate 71. Mg(2+)-binding residues include aspartate 71 and glutamate 139. Residues 146-148 (DIE), 186-191 (KTKPTQ), and lysine 222 contribute to the CTP site. Residues 186–191 (KTKPTQ) and lysine 222 contribute to the UTP site. In terms of domain architecture, Glutamine amidotransferase type-1 spans 290 to 541 (TIAMVGKYME…VNAALAQKAR (252 aa)). Glycine 351 provides a ligand contact to L-glutamine. Cysteine 378 serves as the catalytic Nucleophile; for glutamine hydrolysis. L-glutamine-binding positions include 379–382 (LGMQ), glutamate 402, and arginine 469. Catalysis depends on residues histidine 514 and glutamate 516.

Belongs to the CTP synthase family. Homotetramer.

It catalyses the reaction UTP + L-glutamine + ATP + H2O = CTP + L-glutamate + ADP + phosphate + 2 H(+). The catalysed reaction is L-glutamine + H2O = L-glutamate + NH4(+). It carries out the reaction UTP + NH4(+) + ATP = CTP + ADP + phosphate + 2 H(+). The protein operates within pyrimidine metabolism; CTP biosynthesis via de novo pathway; CTP from UDP: step 2/2. Its activity is regulated as follows. Allosterically activated by GTP, when glutamine is the substrate; GTP has no effect on the reaction when ammonia is the substrate. The allosteric effector GTP functions by stabilizing the protein conformation that binds the tetrahedral intermediate(s) formed during glutamine hydrolysis. Inhibited by the product CTP, via allosteric rather than competitive inhibition. Its function is as follows. Catalyzes the ATP-dependent amination of UTP to CTP with either L-glutamine or ammonia as the source of nitrogen. Regulates intracellular CTP levels through interactions with the four ribonucleotide triphosphates. The polypeptide is CTP synthase (Azotobacter vinelandii (strain DJ / ATCC BAA-1303)).